The sequence spans 222 residues: Adenylate kinase (222 aa).

An ATP-binding site is contributed by 10 to 15; sequence GAGKGT. An NMP region spans residues 30–59; it reads STGDMLRAAVKAGTPLGIEAKKVMDAGGLV. Residues Thr-31, Arg-36, 57-59, 85-88, and Gln-92 contribute to the AMP site; these read GLV and GFPR. The LID stretch occupies residues 122 to 159; the sequence is GRRVHVASGRTYHVKYNPPKNEGQDDETGDPLIQRDDD. Residues Arg-123 and 132–133 contribute to the ATP site; that span reads TY. Residues 135-162 are disordered; the sequence is VKYNPPKNEGQDDETGDPLIQRDDDKEE. Residues Arg-156 and Arg-167 each coordinate AMP. Gly-207 contacts ATP.

It belongs to the adenylate kinase family. In terms of assembly, monomer.

Its subcellular location is the cytoplasm. It carries out the reaction AMP + ATP = 2 ADP. Its pathway is purine metabolism; AMP biosynthesis via salvage pathway; AMP from ADP: step 1/1. In terms of biological role, catalyzes the reversible transfer of the terminal phosphate group between ATP and AMP. Plays an important role in cellular energy homeostasis and in adenine nucleotide metabolism. The polypeptide is Adenylate kinase (Ralstonia nicotianae (strain ATCC BAA-1114 / GMI1000) (Ralstonia solanacearum)).